We begin with the raw amino-acid sequence, 196 residues long: Large ribosomal subunit protein eL15 (196 aa).

Residues 155 to 196 are disordered; the sequence is THRGRAERGLTSAGKKGRGQRRKGKGTEKNYPSVQAHDRRGK. Over residues 169–178 the composition is skewed to basic residues; the sequence is KKGRGQRRKG.

Belongs to the eukaryotic ribosomal protein eL15 family.

This Methanocella arvoryzae (strain DSM 22066 / NBRC 105507 / MRE50) protein is Large ribosomal subunit protein eL15.